Here is a 413-residue protein sequence, read N- to C-terminus: Serine hydroxymethyltransferase (413 aa).

(6S)-5,6,7,8-tetrahydrofolate is bound by residues Leu115 and 119–121; that span reads GHL. An N6-(pyridoxal phosphate)lysine modification is found at Lys224.

It belongs to the SHMT family. As to quaternary structure, homodimer. Pyridoxal 5'-phosphate is required as a cofactor.

It localises to the cytoplasm. The catalysed reaction is (6R)-5,10-methylene-5,6,7,8-tetrahydrofolate + glycine + H2O = (6S)-5,6,7,8-tetrahydrofolate + L-serine. Its pathway is one-carbon metabolism; tetrahydrofolate interconversion. It participates in amino-acid biosynthesis; glycine biosynthesis; glycine from L-serine: step 1/1. In terms of biological role, catalyzes the reversible interconversion of serine and glycine with tetrahydrofolate (THF) serving as the one-carbon carrier. This reaction serves as the major source of one-carbon groups required for the biosynthesis of purines, thymidylate, methionine, and other important biomolecules. Also exhibits THF-independent aldolase activity toward beta-hydroxyamino acids, producing glycine and aldehydes, via a retro-aldol mechanism. The polypeptide is Serine hydroxymethyltransferase (Mycoplasma capricolum subsp. capricolum (strain California kid / ATCC 27343 / NCTC 10154)).